The chain runs to 1213 residues: A disintegrin and metalloproteinase with thrombospondin motifs 19 (1213 aa).

An N-terminal signal peptide occupies residues 1–27; sequence MGKNREMRLTHICCCCLLYQLGFLSNG. Positions 28–322 are excised as a propeptide; that stretch reads IVSELQFAPD…KIAESGRGKR (295 aa). Disordered regions lie at residues 49–161 and 192–215; these read WRRE…PPPA and FLAPRFAVEQRPNPGPGPTGAASA. The span at 52–71 shows a compositional bias: gly residues; sequence EPVDPAGGSGGSADPGWVRG. Acidic residues predominate over residues 110-119; the sequence is RPPPPSEGEE. Over residues 120 to 139 the composition is skewed to low complexity; that stretch reads DEELESQELPRGSSGAAALS. Residues 140–155 are compositionally biased toward pro residues; sequence PGAPASWQPPPPPQPP. N266 is a glycosylation site (N-linked (GlcNAc...) asparagine). The Cysteine switch motif lies at 298-305; it reads HYCGIISD. A Zn(2+)-binding site is contributed by C300. One can recognise a Peptidase M12B domain in the interval 331 to 551; it reads YNIETVVVAD…KASNCLLQTN (221 aa). Intrachain disulfides connect C407-C472, C447-C454, C466-C546, C505-C530, C575-C599, C586-C607, C594-C626, C620-C631, C651-C686, C655-C691, and C666-C676. A Zn(2+)-binding site is contributed by H488. E489 is an active-site residue. 2 residues coordinate Zn(2+): H492 and H498. The Disintegrin domain occupies 552–639; the sequence is PQSVNSVMVP…ECTSRTSAPE (88 aa). Residues 640-692 form the TSP type-1 1 domain; that stretch reads HLAGEWSLWSPCSRTCSAGISSRERKCPGLDSEARDCNGPRKQYRICENPPCP. The tract at residues 797–920 is spacer; sequence IIKGDFNHTR…PENQSSKAPE (124 aa). N-linked (GlcNAc...) asparagine glycosylation is found at N803, N913, N955, and N1015. 4 TSP type-1 domains span residues 921-981, 982-1043, 1045-1089, and 1093-1150; these read PLFM…NEQP, CQTR…QDCM, VWEA…EDCE, and KCYV…QPCN. Intrachain disulfides connect C994/C1037, C998/C1042, and C1009/C1026. One can recognise a PLAC domain in the interval 1166–1205; sequence LTFKCLGDQWPVYCRVIREKNLCQDMRWYQRCCETCRDFY.

Requires Zn(2+) as cofactor. Post-translationally, the precursor is cleaved by a furin endopeptidase. In terms of processing, glycosylated. Can be O-fucosylated by POFUT2 on a serine or a threonine residue found within the consensus sequence C1-X(2)-(S/T)-C2-G of the TSP type-1 repeat domains where C1 and C2 are the first and second cysteine residue of the repeat, respectively. Fucosylated repeats can then be further glycosylated by the addition of a beta-1,3-glucose residue by the glucosyltransferase, B3GALTL. Fucosylation mediates the efficient secretion of ADAMTS family members. Can also be C-glycosylated with one or two mannose molecules on tryptophan residues within the consensus sequence W-X-X-W of the TPRs, and N-glycosylated. These other glycosylations can also facilitate secretion. As to expression, expressed in fetal lung, but not in any adult tissues examined. Expression was detected in an osteosarcoma cDNA library.

It is found in the secreted. Its subcellular location is the extracellular space. It localises to the extracellular matrix. This Homo sapiens (Human) protein is A disintegrin and metalloproteinase with thrombospondin motifs 19 (ADAMTS19).